A 271-amino-acid chain; its full sequence is Transmembrane protein 150A (271 aa).

Residues 1–2 (MT) lie on the Cytoplasmic side of the membrane. Residues 3–23 (AWILLPVSLSAFSITGIWTVY) traverse the membrane as a helical segment. The Extracellular portion of the chain corresponds to 24-75 (AMAVMNHHVCPVENWSYNESCPPDPAEQGGPKTCCTLDDVPLISKCGSYPPE). Asn-37 and Asn-41 each carry an N-linked (GlcNAc...) asparagine glycan. A helical transmembrane segment spans residues 76–96 (SCLFSLIGNMGAFMVALICLL). Topologically, residues 97–108 (RYGQLLEQSRHS) are cytoplasmic. A helical transmembrane segment spans residues 109-129 (WVNTTALITGCTNAAGLLVVG). Topologically, residues 130-140 (NFQVDHARSLH) are extracellular. Residues 141 to 161 (YVGAGVAFPAGLLFVCLHCAL) form a helical membrane-spanning segment. At 162-178 (SYQGATAPLDLAVAYLR) the chain is on the cytoplasmic side. A helical transmembrane segment spans residues 179–199 (SVLAVIAFITLVLSGVFFVHE). Residues 200 to 211 (SSQLQHGAALCE) are Extracellular-facing. The helical transmembrane segment at 212-232 (WVCVIDILIFYGTFSYEFGAV) threads the bilayer. At 233–271 (SSDTLVAALQPTPGRACKSSGSSSTSTHLNCAPESIAMI) the chain is on the cytoplasmic side.

Belongs to the DRAM/TMEM150 family. As to quaternary structure, interacts (via C-terminal cytoplasmic tail) with PI4KA.

It localises to the cell membrane. Its function is as follows. Regulates localization of phosphatidylinositol 4-kinase (PI4K) to the plasma membrane, possibly by reducing the association of TTC7 (TTC7A or TTC7B) with the PI4K complex. Acts as a regulator of phosphatidylinositol 4-phosphate (PtdIns(4)P) synthesis. May also play a role in fasting-induced catabolism. The polypeptide is Transmembrane protein 150A (TMEM150A) (Homo sapiens (Human)).